A 394-amino-acid chain; its full sequence is Phosphatidylinositol 4-phosphate 5-kinase-like protein 1 (394 aa).

Residues 36 to 393 (DKQSRLGLFE…RLCQWVEAHT (358 aa)) enclose the PIPK domain.

As to quaternary structure, heterodimerizes with other type I phosphatidylinositol 4-phosphate 5-kinase.

Its subcellular location is the cytoplasm. It is found in the membrane. The enzyme catalyses a 1,2-diacyl-sn-glycero-3-phospho-(1D-myo-inositol 4-phosphate) + ATP = a 1,2-diacyl-sn-glycero-3-phospho-(1D-myo-inositol-4,5-bisphosphate) + ADP + H(+). In terms of biological role, may act as a scaffold to localize and regulate type I PI(4)P 5-kinases to specific compartments within the cell, where they generate PI(4,5)P2 for actin nucleation, signaling and scaffold protein recruitment and conversion to PI(3,4,5)P3. The sequence is that of Phosphatidylinositol 4-phosphate 5-kinase-like protein 1 (PIP5KL1) from Homo sapiens (Human).